The following is a 459-amino-acid chain: uncharacterized protein (459 aa).

In terms of domain architecture, TRAM spans 5–63; sequence PVEEGQKFPLTIRRMGINGEGIGYFKKAVVFVPGAITGEEVVVEAVKVRDRFTEAKLNK. Cysteine 76, cysteine 82, cysteine 85, and cysteine 166 together coordinate [4Fe-4S] cluster. 4 residues coordinate S-adenosyl-L-methionine: glutamine 290, tyrosine 319, aspartate 340, and aspartate 388. Cysteine 415 functions as the Nucleophile in the catalytic mechanism.

The protein belongs to the class I-like SAM-binding methyltransferase superfamily. RNA M5U methyltransferase family.

This is an uncharacterized protein from Listeria monocytogenes serotype 4b (strain F2365).